A 156-amino-acid polypeptide reads, in one-letter code: Endoribonuclease YbeY (156 aa).

The Zn(2+) site is built by His122, His126, and His132.

This sequence belongs to the endoribonuclease YbeY family. The cofactor is Zn(2+).

The protein resides in the cytoplasm. Its function is as follows. Single strand-specific metallo-endoribonuclease involved in late-stage 70S ribosome quality control and in maturation of the 3' terminus of the 16S rRNA. The protein is Endoribonuclease YbeY of Geobacillus thermodenitrificans (strain NG80-2).